The primary structure comprises 239 residues: MKSGTLKTKGFKFKQFSIASSNSGMPVSTDGVLLGAWADFHHSQNLLDIGTGTGLLSLMCAQRYAHLSITAVDIDAHAMEAAQENFSHSPWHSRLHLQHGDVLKLNFTHRFDGIICNPPYFNSGEQAQATQRATARHTDTLAHDALLLRCRELLTPNGKANFVLPLTEGEQFLQLAQQQGWHLHRLCRVKPSPNKPVHRLLFELGLSTATTSEEHLTINDGSTYSAAFVKLCQDFYLKM.

The protein belongs to the methyltransferase superfamily. tRNA (adenine-N(6)-)-methyltransferase family.

Its subcellular location is the cytoplasm. The catalysed reaction is adenosine(37) in tRNA1(Val) + S-adenosyl-L-methionine = N(6)-methyladenosine(37) in tRNA1(Val) + S-adenosyl-L-homocysteine + H(+). In terms of biological role, specifically methylates the adenine in position 37 of tRNA(1)(Val) (anticodon cmo5UAC). This is tRNA1(Val) (adenine(37)-N6)-methyltransferase from Vibrio vulnificus (strain YJ016).